The chain runs to 258 residues: Oxidoreductase fscI (258 aa).

5 residues coordinate NADP(+): L34, R59, D82, N109, and K141. S163 functions as the Proton donor in the catalytic mechanism. An NADP(+)-binding site is contributed by R193.

It belongs to the short-chain dehydrogenases/reductases (SDR) family.

It participates in secondary metabolite biosynthesis. Functionally, oxidoreductase; part of the fragmented gene cluster that mediates the biosynthesis of fusarochromene, a tryptophan-derived metabolite closely related to a group of mycotoxins including fusarochromanone. Within the pathway, fscI catalyzes the formation of the chromene ring from the prenyl moity added by the prenyltransferase fscG. The first step of the pathway is the epimerization of L-tryptophan to D-tryptophan in the presence of the NRPS-like tryptophan epimerase fscC. D-tryptophan is subsequently hydroxylated by the tryptophan 6-hydroxylase fscE to yield 6-hydroxytryptophan. The pyrrole ring undergoes cleavaged by the tryptophan 2,3-dioxygenase fscD and is finally converted to 4-hydroxykyrunenine by the hydrolase fscH. The NRPS-like oxidoreductase fscA reduces the carboxyl group to primary alcohol and the DMATS-type prenyltransferase fscG performs prenylation, followed by the formation of a chromene ring catalyzed by the oxidoreductase fscI, which leads to desacetylfusarochromene. Epoxidation by fscF and rearrangement reactions of chromene double bonds convert compound desacetylfusarochromene to fusarochromanones. Although specific acetyltransferases were not found near the fsc gene cluster, several predicted enzymes containing the N-acetyltransferase superfamily domain are present in the genome of F.equiseti. These predicted enzymes may have the potential to convert desacetylfusarochromene to fusarochromene. This is Oxidoreductase fscI from Fusarium equiseti (Fusarium scirpi).